We begin with the raw amino-acid sequence, 913 residues long: Calcium-activated chloride channel regulator 1 (913 aa).

The signal sequence occupies residues 1–21 (MESLKSPVFLLILHLLEGVLS). Positions 46–199 (DEALIQHIKD…AITGKNQVRR (154 aa)) are metalloprotease domain. Residue histidine 156 participates in Zn(2+) binding. Glutamate 157 is an active-site residue. Zn(2+) is bound by residues histidine 160 and asparagine 167. Positions 307–476 (IVCLVLDKSG…NGLVDAFAAL (170 aa)) constitute a VWFA domain. N-linked (GlcNAc...) asparagine glycosylation is found at asparagine 504, asparagine 770, asparagine 804, asparagine 810, asparagine 836, and asparagine 887.

Belongs to the CLCR family. In terms of processing, the 110 kDa translation product is autoproteolytically cleaved by the metalloprotease domain in the endoplasmic reticulum into a 75 kDa N-terminal and a 35 kDa C-terminal products that remain physically associated with each other. The cleavage is necessary for calcium-activated chloride channel (CaCC) activation activity. Post-translationally, glycosylated. As to expression, exclusively expressed in the digestive and respiratory tracts and in the uterus (at protein level). Expressed in small intestine, colon, stomach, and uterus and slightly expressed in trachea tissue. Exclusively expressed in the mucin granule membranes of gastrointestinal, respiratory, and uterine goblet cells and other mucin-producing cells. In the colon, expressed in the surface mucous cells. In the stomach highly expressed in the surface epithelium in the pylorus. Strongly expressed in the airway epithelium of lung tissues associated with airway hyperresponsiveness (AHR).

It is found in the secreted. The protein resides in the extracellular space. Its function is as follows. May be involved in mediating calcium-activated chloride conductance. May play critical roles in goblet cell metaplasia, mucus hypersecretion, cystic fibrosis and AHR. May be involved in the regulation of mucus production and/or secretion by goblet cells. Involved in the regulation of tissue inflammation in the innate immune response. May play a role as a tumor suppressor. Induces MUC5AC. This is Calcium-activated chloride channel regulator 1 (Clca1) from Mus musculus (Mouse).